The chain runs to 366 residues: MSGNTLGTLFTVTTFGESHGPAIGCVIDGCPPGMSLTEADIQAELDRRKPGTSRHVTQRQEADEVEILSGVFEGVTTGTPIALLIRNTDQRSKDYGNIVETFRPGHADYTYWQKYGIRDYRGGGRSSARLTAPIVGAGAVAKKWLRERFGVEVRGCMSALGEIDVPFVDWSHVRENPFFAPNAAIVPELEAYMDALRKDGDSIGARIDVVASGVPVGWGEPVFDRLDADIAKAMMSINAVKGVEIGAGFASVAERGSVHGDELTPAGFVGNHAGGVLGGISTGQDVTVSIAIKPTSSIRTPRRSITKAGEEAIVETFGRHDPCVGIRATPIAESMLALVLIDHALRHRAQCGDVETSTPKIAGSAT.

NADP(+)-binding residues include R48 and R54. FMN is bound by residues 125 to 127, 238 to 239, G278, 293 to 297, and R319; these read RSS, NA, and KPTSS.

It belongs to the chorismate synthase family. Homotetramer. It depends on FMNH2 as a cofactor.

The enzyme catalyses 5-O-(1-carboxyvinyl)-3-phosphoshikimate = chorismate + phosphate. It participates in metabolic intermediate biosynthesis; chorismate biosynthesis; chorismate from D-erythrose 4-phosphate and phosphoenolpyruvate: step 7/7. In terms of biological role, catalyzes the anti-1,4-elimination of the C-3 phosphate and the C-6 proR hydrogen from 5-enolpyruvylshikimate-3-phosphate (EPSP) to yield chorismate, which is the branch point compound that serves as the starting substrate for the three terminal pathways of aromatic amino acid biosynthesis. This reaction introduces a second double bond into the aromatic ring system. This Burkholderia vietnamiensis (strain G4 / LMG 22486) (Burkholderia cepacia (strain R1808)) protein is Chorismate synthase.